A 469-amino-acid chain; its full sequence is Tubulin gamma-2 chain (469 aa).

142–148 (AGGTGSG) lines the GTP pocket.

Belongs to the tubulin family.

It localises to the cytoplasm. It is found in the cytoskeleton. Its subcellular location is the microtubule organizing center. Functionally, tubulin is the major constituent of microtubules. The gamma chain is found at microtubule organizing centers (MTOC) such as the spindle poles, suggesting that it is involved in the minus-end nucleation of microtubule assembly. This Oryza sativa subsp. japonica (Rice) protein is Tubulin gamma-2 chain (TUBG2).